A 502-amino-acid polypeptide reads, in one-letter code: Probable malate:quinone oxidoreductase 1 (502 aa).

Belongs to the MQO family. Requires FAD as cofactor.

The enzyme catalyses (S)-malate + a quinone = a quinol + oxaloacetate. It participates in carbohydrate metabolism; tricarboxylic acid cycle; oxaloacetate from (S)-malate (quinone route): step 1/1. This chain is Probable malate:quinone oxidoreductase 1, found in Pseudomonas putida (strain ATCC 47054 / DSM 6125 / CFBP 8728 / NCIMB 11950 / KT2440).